We begin with the raw amino-acid sequence, 1358 residues long: DNA-directed RNA polymerase subunit beta (1358 aa).

It belongs to the RNA polymerase beta chain family. As to quaternary structure, the RNAP catalytic core consists of 2 alpha, 1 beta, 1 beta' and 1 omega subunit. When a sigma factor is associated with the core the holoenzyme is formed, which can initiate transcription.

The enzyme catalyses RNA(n) + a ribonucleoside 5'-triphosphate = RNA(n+1) + diphosphate. In terms of biological role, DNA-dependent RNA polymerase catalyzes the transcription of DNA into RNA using the four ribonucleoside triphosphates as substrates. This is DNA-directed RNA polymerase subunit beta from Chromohalobacter salexigens (strain ATCC BAA-138 / DSM 3043 / CIP 106854 / NCIMB 13768 / 1H11).